Reading from the N-terminus, the 751-residue chain is uncharacterized protein (751 aa).

Residues 73 to 169 (FGVVHSHTPK…PVLIDDDTGE (97 aa)) form a disordered region. Low complexity predominate over residues 96-109 (ATSTRRSATAQRAA). Residues 111-120 (LKSSPVDQWS) are compositionally biased toward polar residues.

This is an uncharacterized protein from Invertebrate iridescent virus 3 (IIV-3).